The chain runs to 523 residues: Protein nucleotidyltransferase YdiU (523 aa).

Residues Gly101, Gly103, Arg104, Lys128, Asp140, Gly141, Arg198, and Arg205 each contribute to the ATP site. The active-site Proton acceptor is Asp275. Mg(2+)-binding residues include Asn276 and Asp285. ATP is bound at residue Asp285.

This sequence belongs to the SELO family. Mg(2+) is required as a cofactor. Mn(2+) serves as cofactor.

It carries out the reaction L-seryl-[protein] + ATP = 3-O-(5'-adenylyl)-L-seryl-[protein] + diphosphate. The enzyme catalyses L-threonyl-[protein] + ATP = 3-O-(5'-adenylyl)-L-threonyl-[protein] + diphosphate. It catalyses the reaction L-tyrosyl-[protein] + ATP = O-(5'-adenylyl)-L-tyrosyl-[protein] + diphosphate. The catalysed reaction is L-histidyl-[protein] + UTP = N(tele)-(5'-uridylyl)-L-histidyl-[protein] + diphosphate. It carries out the reaction L-seryl-[protein] + UTP = O-(5'-uridylyl)-L-seryl-[protein] + diphosphate. The enzyme catalyses L-tyrosyl-[protein] + UTP = O-(5'-uridylyl)-L-tyrosyl-[protein] + diphosphate. Nucleotidyltransferase involved in the post-translational modification of proteins. It can catalyze the addition of adenosine monophosphate (AMP) or uridine monophosphate (UMP) to a protein, resulting in modifications known as AMPylation and UMPylation. This is Protein nucleotidyltransferase YdiU from Aromatoleum aromaticum (strain DSM 19018 / LMG 30748 / EbN1) (Azoarcus sp. (strain EbN1)).